Consider the following 269-residue polypeptide: Ribonuclease HII (269 aa).

The RNase H type-2 domain maps to 28-222; sequence RHVAGADEAG…VSGRRGAPPR (195 aa). 3 residues coordinate a divalent metal cation: D34, E35, and D128.

This sequence belongs to the RNase HII family. It depends on Mn(2+) as a cofactor. The cofactor is Mg(2+).

The protein resides in the cytoplasm. The catalysed reaction is Endonucleolytic cleavage to 5'-phosphomonoester.. Functionally, endonuclease that specifically degrades the RNA of RNA-DNA hybrids. The polypeptide is Ribonuclease HII (Salinispora arenicola (strain CNS-205)).